Here is a 600-residue protein sequence, read N- to C-terminus: DDB1- and CUL4-associated factor 15 (600 aa).

The tract at residues 1–30 (MAPSSKSERNSGAGSGGGGPGGAGGKRAAG) is disordered. A compositionally biased stretch (gly residues) spans 13-27 (AGSGGGGPGGAGGKR). Phosphoserine is present on S50. C193, C196, C211, and H214 together coordinate Zn(2+). E7820 contacts are provided by residues F231 and 234–235 (AF). Over residues 280 to 295 (PASPPEPQSPELPPAL) the composition is skewed to pro residues. The segment at 280 to 316 (PASPPEPQSPELPPALPSFCPEAAPARSSGSPEPSPA) is disordered. Phosphoserine is present on residues S310 and S314.

Component of the DCX(DCAF15) complex, also named CLR4(DCAF15) complex, composed of DCAF15, DDB1, cullin-4 (CUL4A or CUL4B), DDA1 and RBX1.

Its pathway is protein modification; protein ubiquitination. Aryl sulfonamide anticancer drugs change the substrate specificity of DCAF15 by acting as a molecular glue that promotes binding between DCAF15 and weak affinity interactors, such as RBM39. Its function is as follows. Substrate-recognition component of the DCX(DCAF15) complex, a cullin-4-RING E3 ubiquitin-protein ligase complex that mediates ubiquitination and degradation of target proteins. The DCX(DCAF15) complex acts as a regulator of the natural killer (NK) cells effector functions, possibly by mediating ubiquitination and degradation of cohesin subunits SMC1A and SMC3. May play a role in the activation of antigen-presenting cells (APC) and their interaction with NK cells. Binding of aryl sulfonamide anticancer drugs, such as indisulam (E7070) or E7820, change the substrate specificity of the DCX(DCAF15) complex, leading to promote ubiquitination and degradation of splicing factor RBM39. RBM39 degradation results in splicing defects and death in cancer cell lines. Aryl sulfonamide anticancer drugs change the substrate specificity of DCAF15 by acting as a molecular glue that promotes binding between DCAF15 and weak affinity interactor RBM39. Aryl sulfonamide anticancer drugs also promote ubiquitination and degradation of RBM23 and PRPF39. The polypeptide is DDB1- and CUL4-associated factor 15 (Homo sapiens (Human)).